The following is a 3354-amino-acid chain: Cadherin-23 (3354 aa).

The N-terminal stretch at 1 to 23 (MGRHVATSCHVAWLLVLISGCWG) is a signal peptide. Topologically, residues 24 to 3064 (QVNRLPFFTN…SVRLPDDMSA (3041 aa)) are extracellular. Cadherin domains lie at 34 to 132 (HFFD…APTF), 133 to 236 (HNQP…DPIF), 237 to 348 (INLP…APEF), 349 to 460 (NSSE…RPIF), 461 to 561 (SQPL…VPTF), 562 to 671 (QKDA…PPTF), 672 to 784 (SKPA…APYY), 779 to 890 (KDAP…DPTF), 891 to 995 (QNLP…TPTF), 996 to 1102 (FPAV…RPIF), 1103 to 1208 (LQSS…APVF), 1210 to 1313 (QQQY…AVQF), 1314 to 1418 (SNAS…SPRF), 1420 to 1527 (FTSD…PPVI), 1529 to 1634 (SPFG…APMF), 1635 to 1744 (QQPH…VPTF), 1745 to 1851 (PRDY…DPVL), 1852 to 1959 (LNLP…HPLF), 1960 to 2069 (TKST…RPTF), 2070 to 2174 (SPAT…RPEF), 2175 to 2293 (LNPI…TPQF), 2297 to 2402 (GITY…NPIF), 2403 to 2509 (DQPS…RPQF), 2510 to 2611 (SKPQ…RPVF), 2614 to 2722 (PPNG…EPLF), 2729 to 2846 (SPQY…PPRF), and 2847 to 2975 (TKAE…EEEF). N-linked (GlcNAc...) asparagine glycosylation is found at asparagine 155 and asparagine 206. 32 N-linked (GlcNAc...) asparagine glycosylation sites follow: asparagine 349, asparagine 393, asparagine 434, asparagine 466, asparagine 472, asparagine 652, asparagine 694, asparagine 765, asparagine 810, asparagine 827, asparagine 941, asparagine 1001, asparagine 1018, asparagine 1171, asparagine 1282, asparagine 1315, asparagine 1473, asparagine 1534, asparagine 1651, asparagine 1667, asparagine 1818, asparagine 1857, asparagine 1889, asparagine 1902, asparagine 2013, asparagine 2050, asparagine 2129, asparagine 2168, asparagine 2195, asparagine 2263, asparagine 2357, and asparagine 2369. N-linked (GlcNAc...) asparagine glycosylation is found at asparagine 2616, asparagine 2749, asparagine 2808, asparagine 2877, asparagine 2896, asparagine 2941, and asparagine 2981. The chain crosses the membrane as a helical span at residues 3065–3085 (LQMAIIVLAILLFLAAMLFVL). The Cytoplasmic portion of the chain corresponds to 3086-3354 (MNWYYRTVHK…METPLEITEL (269 aa)).

As to quaternary structure, antiparallel heterodimer with PCDH15. Interacts with USH1C and USH1G. As to expression, particularly strong expression in the retina. Found also in the cochlea.

It is found in the cell membrane. In terms of biological role, cadherins are calcium-dependent cell adhesion proteins. They preferentially interact with themselves in a homophilic manner in connecting cells. CDH23 is required for establishing and/or maintaining the proper organization of the stereocilia bundle of hair cells in the cochlea and the vestibule during late embryonic/early postnatal development. It is part of the functional network formed by USH1C, USH1G, CDH23 and MYO7A that mediates mechanotransduction in cochlear hair cells. Required for normal hearing. The protein is Cadherin-23 of Homo sapiens (Human).